Consider the following 156-residue polypeptide: Ribosomal RNA large subunit methyltransferase H (156 aa).

S-adenosyl-L-methionine-binding positions include Leu-73, Gly-104, and 123-128; that span reads ISSMTL.

This sequence belongs to the RNA methyltransferase RlmH family. In terms of assembly, homodimer.

The protein localises to the cytoplasm. It catalyses the reaction pseudouridine(1915) in 23S rRNA + S-adenosyl-L-methionine = N(3)-methylpseudouridine(1915) in 23S rRNA + S-adenosyl-L-homocysteine + H(+). In terms of biological role, specifically methylates the pseudouridine at position 1915 (m3Psi1915) in 23S rRNA. The polypeptide is Ribosomal RNA large subunit methyltransferase H (Janthinobacterium sp. (strain Marseille) (Minibacterium massiliensis)).